Reading from the N-terminus, the 1187-residue chain is ATP-dependent DNA helicase MER3 (1187 aa).

Positions 1–41 are disordered; that stretch reads MKTKFDRLGTGKRSRPSPNNIDFNDQSATFKRNKKNSRQPS. Over residues 16–30 the composition is skewed to polar residues; it reads PSPNNIDFNDQSATF. The region spanning 148-322 is the Helicase ATP-binding domain; it reads PSIYESNENC…WLKTNNELPA (175 aa). 161–168 is a binding site for ATP; the sequence is SPTGSGKT. Positions 268–271 match the DEIH box motif; the sequence is DEIH. Residues 360–542 enclose the Helicase C-terminal domain; sequence KLIEIIEKHA…NLIEHLAAET (183 aa). Residues 616–922 enclose the SEC63 domain; it reads STAYGNAMTR…PKLEKIEFSI (307 aa). The segment at 1039–1054 adopts a C4-type zinc-finger fold; it reads CFHSCKDKTQCRHLCC. Residues 1146-1187 are disordered; the sequence is NCPEIIPIDLESSDSYSSNTAASSISDPNGDLDFLGSDIEFE. Residues 1158-1171 show a composition bias toward low complexity; that stretch reads SDSYSSNTAASSIS.

The protein belongs to the helicase family. SKI2 subfamily. Oligomerizes. A divalent metal cation serves as cofactor. The cofactor is Zn(2+).

It localises to the nucleus. The catalysed reaction is Couples ATP hydrolysis with the unwinding of duplex DNA by translocating in the 3'-5' direction.. It carries out the reaction ATP + H2O = ADP + phosphate + H(+). In terms of biological role, DNA-dependent ATPase and 3'-5' DNA helicase. Required in the control of double strand break transition and crossover during meiosis. ATPase is slightly better stimulated by single-stranded (ss) than double-stranded (ds)DNA. Unwinds Holliday junction (HJ) DNA to Y-DNA and to ssDNA. Efficient unwinding requires 6 nucleotides of 3'-ssDNA; seems to initiate unwinding from blunt ends when they open slightly. Binds HJ, dsDNA, ssDNA and 3'- and 5-overhang DNA. This Saccharomyces cerevisiae (strain ATCC 204508 / S288c) (Baker's yeast) protein is ATP-dependent DNA helicase MER3.